We begin with the raw amino-acid sequence, 333 residues long: Electron transfer flavoprotein subunit alpha, mitochondrial (333 aa).

Residues 1-19 (MFRAAAPGQLRRAASLLRF) constitute a mitochondrion transit peptide. A domain I region spans residues 20–204 (QSTLVIAEHA…EISEWLDQKL (185 aa)). An N6-acetyllysine; alternate modification is found at Lys59. Residue Lys59 is modified to N6-succinyllysine; alternate. An N6-acetyllysine modification is found at Lys62. Lys69 carries the post-translational modification N6-acetyllysine; alternate. Position 69 is an N6-succinyllysine; alternate (Lys69). Lys75 carries the N6-acetyllysine modification. Lys85 bears the N6-acetyllysine; alternate mark. Lys85 bears the N6-succinyllysine; alternate mark. Thr93 is subject to Phosphothreonine. N6-acetyllysine is present on residues Lys101 and Lys139. A Phosphoserine modification is found at Ser140. Lys158 carries the N6-acetyllysine; alternate modification. Position 158 is an N6-succinyllysine; alternate (Lys158). The residue at position 164 (Lys164) is an N6-acetyllysine. An N6-succinyllysine modification is found at Lys187. The residue at position 203 (Lys203) is an N6-acetyllysine; alternate. Lys203 carries the N6-succinyllysine; alternate modification. The tract at residues 205–333 (TKSDRPELTG…PEMTEILKKK (129 aa)) is domain II. N6-succinyllysine is present on Lys216. Arg223 provides a ligand contact to FAD. N6-acetyllysine; alternate is present on residues Lys226 and Lys232. 2 positions are modified to N6-succinyllysine; alternate: Lys226 and Lys232. FAD-binding positions include Ser248, 263-266 (VGQT), 281-286 (SGAIQH), and Asn300. At Lys301 the chain carries N6-succinyllysine. 318 to 319 (DL) is an FAD binding site.

Belongs to the ETF alpha-subunit/FixB family. Heterodimer composed of ETFA and ETFB. Identified in a complex that contains ETFA, ETFB and ETFRF1. Interaction with ETFRF1 promotes dissociation of the bound FAD and loss of electron transfer activity. Interacts with TASOR. FAD serves as cofactor. Post-translationally, the N-terminus is blocked.

It is found in the mitochondrion matrix. Heterodimeric electron transfer flavoprotein that accepts electrons from several mitochondrial dehydrogenases, including acyl-CoA dehydrogenases, glutaryl-CoA and sarcosine dehydrogenase. It transfers the electrons to the main mitochondrial respiratory chain via ETF-ubiquinone oxidoreductase (ETF dehydrogenase). Required for normal mitochondrial fatty acid oxidation and normal amino acid metabolism. In Homo sapiens (Human), this protein is Electron transfer flavoprotein subunit alpha, mitochondrial (ETFA).